Consider the following 1598-residue polypeptide: Mushroom body large-type Kenyon cell-specific protein 1 (1598 aa).

4 disordered regions span residues 83 to 105 (PGNL…SLPA), 140 to 387 (RHHH…SDGI), 436 to 462 (PHDD…PMSV), and 495 to 525 (PLVG…SQDN). Residues 140–151 (RHHHLQNHHHHL) are compositionally biased toward basic residues. Positions 164–174 (QQQQQQQQRQQ) are enriched in low complexity. A compositionally biased stretch (basic and acidic residues) spans 175-191 (QRQEERRLRPDEIKVEV). The span at 210–263 (STDASTPATVTTTGATTTLPAASATGTGPATPSAVVATSNATAAMTTGTTTIPT) shows a compositional bias: low complexity. Over residues 275 to 291 (EGADDRDDDEENEEEED) the composition is skewed to acidic residues. 3 stretches are compositionally biased toward basic and acidic residues: residues 292–305 (GRGQ…LKLD), 315–324 (LRREKDRGSR), and 335–346 (DGTKERTEEVAL). Ser-444 carries the post-translational modification Phosphoserine; by MAPK. Residues 445 to 461 (PQSDSSSSSRSAESPMS) show a composition bias toward low complexity. The HTH psq-type 1 domain maps to 582-634 (VGAGGGRRAYTEEELQAALRDIQSGKLGTRRAAVIYGIPRSTLRNKVYKLAME). Positions 610–630 (TRRAAVIYGIPRSTLRNKVYK) form a DNA-binding region, H-T-H motif. Disordered regions lie at residues 636–705 (ERDA…SGAE), 797–877 (RLSK…DSAQ), 962–1045 (GQTV…NYDR), 1082–1145 (ERHL…NGIK), 1248–1283 (ETSA…NGSF), and 1301–1598 (RAMT…SVEQ). The span at 653–687 (APATTITTITTTTTTTTTTTTTTTTPNTTQNASAT) shows a compositional bias: low complexity. The segment covering 694–705 (DEVDDKELSGAE) has biased composition (acidic residues). Low complexity predominate over residues 820–855 (THPQAQAQAQPQQQQQQQQQQPQQQQQQQQQQQQQQ). A compositionally biased stretch (gly residues) spans 965–975 (VSGGGMGGCQP). Residues 1003 to 1021 (ANAQQGQAQAQAKPQSQEA) are compositionally biased toward low complexity. An HTH psq-type 2 domain is found at 1034–1086 (RPKRGKYRNYDRDSLVEAVRAVQRGEMSVHRAGSYYGVPHSTLEYKVKERHLM). The H-T-H motif DNA-binding region spans 1062–1082 (VHRAGSYYGVPHSTLEYKVKE). The span at 1093-1102 (QKQSDDKTKE) shows a compositional bias: basic and acidic residues. Over residues 1103-1120 (TSTVTAAAAATNIRPGTA) the composition is skewed to low complexity. The segment covering 1309-1318 (QQQQASSQQQ) has biased composition (low complexity). Basic and acidic residues-rich tracts occupy residues 1383–1392 (DRGRNDDGSD) and 1407–1442 (GSRD…DRKT). A compositionally biased stretch (low complexity) spans 1447-1466 (PQQPQQQQQQQQQQQQQQQQ). Basic and acidic residues predominate over residues 1481–1497 (TDKKSACDSKLIVDHSS). Over residues 1501–1547 (QQQQPQQQQQQQQQQQPQQQSQQPQQQQPQPQQQQQQQQQQQPQQQQ) the composition is skewed to low complexity. The span at 1562–1577 (RGYNSGNNRSGEQANS) shows a compositional bias: polar residues.

As to quaternary structure, homodimer. As to expression, large-type Kenyon cells of mushroom body.

Its subcellular location is the nucleus. Transcriptional activator which binds to the consensus sequence 5'-CCCTATCGATCGATCTCTACCT-3'. May play a role in higher-order sensory processing. This Apis mellifera (Honeybee) protein is Mushroom body large-type Kenyon cell-specific protein 1 (Mblk-1).